The chain runs to 323 residues: tRNA U34 carboxymethyltransferase (323 aa).

Carboxy-S-adenosyl-L-methionine is bound by residues lysine 91, tryptophan 105, lysine 110, glycine 130, 152 to 154 (DPT), 181 to 182 (IE), methionine 196, tyrosine 200, and arginine 315.

The protein belongs to the class I-like SAM-binding methyltransferase superfamily. CmoB family. As to quaternary structure, homotetramer.

The enzyme catalyses carboxy-S-adenosyl-L-methionine + 5-hydroxyuridine(34) in tRNA = 5-carboxymethoxyuridine(34) in tRNA + S-adenosyl-L-homocysteine + H(+). Functionally, catalyzes carboxymethyl transfer from carboxy-S-adenosyl-L-methionine (Cx-SAM) to 5-hydroxyuridine (ho5U) to form 5-carboxymethoxyuridine (cmo5U) at position 34 in tRNAs. This Salmonella paratyphi B (strain ATCC BAA-1250 / SPB7) protein is tRNA U34 carboxymethyltransferase.